We begin with the raw amino-acid sequence, 62 residues long: Venom peptide 6 (62 aa).

An N-terminal signal peptide occupies residues 1-26 (MKSTSVFILFAGIAIMACLQMTGTEA). 3 AXPX repeats span residues 26–29 (AAPS), 30–33 (ASPN), and 40–43 (ADPD). Residues 27-46 (APSASPNPTPVARADPDPEA) constitute a propeptide that is removed on maturation.

It belongs to the MCD family. As to expression, expressed by the venom gland.

The protein localises to the secreted. It is found in the target cell membrane. In terms of biological role, antimicrobial peptide with strong activity against the fungus B.cinerea (MIC=5 uM) and the Gram-positive bacterium S.aureus (MIC=50 uM), and no activity against C.albicans (MIC&gt;200 uM), and the Gram-negative bacterium E.coli (MIC&gt;200 uM). Shows cytolytic activity against insect cell lines. Has no hemolytic activity against human erythrocytes. In vivo, peptide injection in the vicinity of the head and thorax of lepidopteran larvae induces feeding disorder that lasts one or two days before recovering. The polypeptide is Venom peptide 6 (Eumenes pomiformis (Potter wasp)).